The sequence spans 462 residues: L-seryl-tRNA(Sec) selenium transferase (462 aa).

Lys295 is subject to N6-(pyridoxal phosphate)lysine.

This sequence belongs to the SelA family. As to quaternary structure, homodecamer; pentamer of dimers. Binds only one seryl-tRNA(Sec) per dimer. Pyridoxal 5'-phosphate serves as cofactor.

The protein localises to the cytoplasm. The catalysed reaction is L-seryl-tRNA(Sec) + selenophosphate + H(+) = L-selenocysteinyl-tRNA(Sec) + phosphate. It participates in aminoacyl-tRNA biosynthesis; selenocysteinyl-tRNA(Sec) biosynthesis; selenocysteinyl-tRNA(Sec) from L-seryl-tRNA(Sec) (bacterial route): step 1/1. Converts seryl-tRNA(Sec) to selenocysteinyl-tRNA(Sec) required for selenoprotein biosynthesis. The chain is L-seryl-tRNA(Sec) selenium transferase from Klebsiella pneumoniae (strain 342).